Consider the following 297-residue polypeptide: Iron/alpha-ketoglutarate-dependent dioxygenase ausU (297 aa).

Fe cation-binding residues include histidine 130, aspartate 132, and histidine 206.

The protein belongs to the PhyH family. In terms of assembly, homodimer. Requires Fe cation as cofactor.

Its pathway is secondary metabolite biosynthesis; terpenoid biosynthesis. Functionally, iron/alpha-ketoglutarate-dependent dioxygenase; part of the gene cluster that mediates the biosynthesis of calidodehydroaustin, a fungal meroterpenoid. The first step of the pathway is the synthesis of 3,5-dimethylorsellinic acid by the polyketide synthase ausA. 3,5-dimethylorsellinic acid is then prenylated by the polyprenyl transferase ausN. Further epoxidation by the FAD-dependent monooxygenase ausM and cyclization by the probable terpene cyclase ausL lead to the formation of protoaustinoid A. Protoaustinoid A is then oxidized to spiro-lactone preaustinoid A3 by the combined action of the FAD-binding monooxygenases ausB and ausC, and the dioxygenase ausE. Acid-catalyzed keto-rearrangement and ring contraction of the tetraketide portion of preaustinoid A3 by ausJ lead to the formation of preaustinoid A4. The aldo-keto reductase ausK, with the help of ausH, is involved in the next step by transforming preaustinoid A4 into isoaustinone which is in turn hydroxylated by the P450 monooxygenase ausI to form austinolide. The cytochrome P450 monooxygenase ausG modifies austinolide to austinol. Austinol is further acetylated to austin by the O-acetyltransferase ausP, which spontaneously changes to dehydroaustin. The cytochrome P450 monooxygenase ausR then converts dehydroaustin is into 7-dehydrodehydroaustin. The hydroxylation catalyzed by ausR permits the O-acetyltransferase ausQ to add an additional acetyl group to the molecule, leading to the formation of acetoxydehydroaustin. The short chain dehydrogenase ausT catalyzes the reduction of the double bond present between carbon atoms 1 and 2 to convert 7-dehydrodehydroaustin into 1,2-dihydro-7-hydroxydehydroaustin. AusQ catalyzes not only an acetylation reaction but also the addition of the PKS ausV diketide product to 1,2-dihydro-7-hydroxydehydroaustin, forming precalidodehydroaustin. Finally, the iron/alpha-ketoglutarate-dependent dioxygenase converts precalidodehydroaustin into calidodehydroaustin. The sequence is that of Iron/alpha-ketoglutarate-dependent dioxygenase ausU from Aspergillus calidoustus.